The following is a 141-amino-acid chain: Globin, extracellular monomeric (141 aa).

The region spanning 1 to 141 (ECDALQRFKV…LGVITGAIHD (141 aa)) is the Globin domain. The cysteines at positions 2 and 131 are disulfide-linked. His-94 contacts heme b.

Belongs to the globin family. In terms of assembly, the giant hemoglobins of worms are formed of a monomeric subunit and a disulfide-bonded trimer. This subunit is monomeric.

The protein localises to the secreted. This is Globin, extracellular monomeric from Tubifex tubifex (Sludge worm).